Consider the following 154-residue polypeptide: UPF0178 protein H16_B0290 (154 aa).

Belongs to the UPF0178 family.

The protein is UPF0178 protein H16_B0290 of Cupriavidus necator (strain ATCC 17699 / DSM 428 / KCTC 22496 / NCIMB 10442 / H16 / Stanier 337) (Ralstonia eutropha).